The primary structure comprises 266 residues: NAD kinase 1 (266 aa).

Catalysis depends on aspartate 45, which acts as the Proton acceptor. NAD(+) contacts are provided by residues 45–46 (DG), 122–123 (NE), and arginine 148. Aspartate 150 provides a ligand contact to ATP. NAD(+) is bound by residues serine 158 and 161–166 (TAYNKA).

The protein belongs to the NAD kinase family. As to quaternary structure, homodimer. The cofactor is Ca(2+). Requires Mn(2+) as cofactor.

The protein resides in the cytoplasm. The enzyme catalyses NAD(+) + ATP = ADP + NADP(+) + H(+). Allosterically inhibited by NADP and activated by quinolinic acid. Strongly inhibited by HgCl(2). In terms of biological role, involved in the regulation of the intracellular balance of NAD and NADP, and is a key enzyme in the biosynthesis of NADP. Catalyzes specifically the phosphorylation on 2'-hydroxyl of the adenosine moiety of NAD to yield NADP. It can use ATP and other nucleoside triphosphates (GTP, UTP) as well as inorganic polyphosphate (poly(P)) as a source of phosphorus. The protein is NAD kinase 1 (ppnKA) of Bacillus subtilis (strain 168).